Reading from the N-terminus, the 849-residue chain is Probable ATP-dependent RNA helicase ddx20 (849 aa).

The interval 9-39 (FSNPMNSNSSNNIENNNNSNNNNNNFKNNFK) is disordered. The Q motif motif lies at 55–83 (ITFSELLLQKEVLKGLEDGGYQRPSPIQL). ATP contacts are provided by residues arginine 77, glutamine 82, 99-106 (AKSGTGKT), and 102-107 (GTGKTI). The region spanning 86–319 (IPLGISGVDL…KLYMNNENLV (234 aa)) is the Helicase ATP-binding domain. The short motif at 255–258 (DEAD) is the DEAD box element. A Helicase C-terminal domain is found at 355–499 (KCKSLVLVLE…QIENENENEN (145 aa)). 4 disordered regions span residues 480-504 (QQQQ…NNNE), 572-644 (INEN…ENDN), 667-737 (SNNN…YPHY), and 761-817 (NNYN…NNPY). 3 stretches are compositionally biased toward acidic residues: residues 583-595 (NEDE…EDDY), 604-615 (EDEEEEQEEDDY), and 624-644 (EEEE…ENDN). 2 stretches are compositionally biased toward low complexity: residues 667 to 687 (SNNN…NNHY) and 696 to 720 (KNSI…SQSN).

It belongs to the DEAD box helicase family. DDX20 subfamily. In terms of assembly, part of the core SMN complex.

It localises to the cytoplasm. Its subcellular location is the nucleus. The catalysed reaction is ATP + H2O = ADP + phosphate + H(+). In terms of biological role, the SMN complex catalyzes the assembly of small nuclear ribonucleoproteins (snRNPs), the building blocks of the spliceosome, and thereby plays an important role in the splicing of cellular pre-mRNAs. Most spliceosomal snRNPs contain a common set of Sm proteins SNRPB, SNRPD1, SNRPD2, SNRPD3, SNRPE, SNRPF and SNRPG that assemble in a heptameric protein ring on the Sm site of the small nuclear RNA to form the core snRNP (Sm core). In the cytosol, the Sm proteins SNRPD1, SNRPD2, SNRPE, SNRPF and SNRPG are trapped in an inactive 6S pICln-Sm complex by the chaperone CLNS1A that controls the assembly of the core snRNP. To assemble core snRNPs, the SMN complex accepts the trapped 5Sm proteins from CLNS1A forming an intermediate. Binding of snRNA inside 5Sm triggers eviction of the SMN complex, thereby allowing binding of SNRPD3 and SNRPB to complete assembly of the core snRNP. May also play a role in the metabolism of small nucleolar ribonucleoprotein (snoRNPs). This is Probable ATP-dependent RNA helicase ddx20 (ddx20) from Dictyostelium discoideum (Social amoeba).